Here is a 226-residue protein sequence, read N- to C-terminus: Large ribosomal subunit protein uL3 (226 aa).

Polar residues predominate over residues 135 to 150; sequence MSSQRASHGNSRSHNV. A disordered region spans residues 135 to 158; it reads MSSQRASHGNSRSHNVPGSIGMAQ. Q158 carries the post-translational modification N5-methylglutamine.

The protein belongs to the universal ribosomal protein uL3 family. In terms of assembly, part of the 50S ribosomal subunit. Forms a cluster with proteins L14 and L19. Post-translationally, methylated by PrmB.

Functionally, one of the primary rRNA binding proteins, it binds directly near the 3'-end of the 23S rRNA, where it nucleates assembly of the 50S subunit. The polypeptide is Large ribosomal subunit protein uL3 (Variovorax paradoxus (strain S110)).